The sequence spans 336 residues: Anthranilate phosphoribosyltransferase (336 aa).

5-phospho-alpha-D-ribose 1-diphosphate-binding positions include G82, 85 to 86 (GD), T90, 92 to 95 (NIST), 110 to 118 (KHGNRFASG), and S122. An anthranilate-binding site is contributed by G82. S94 lines the Mg(2+) pocket. N113 serves as a coordination point for anthranilate. R168 contributes to the anthranilate binding site. Residues D227 and E228 each coordinate Mg(2+).

The protein belongs to the anthranilate phosphoribosyltransferase family. In terms of assembly, homodimer. It depends on Mg(2+) as a cofactor.

It carries out the reaction N-(5-phospho-beta-D-ribosyl)anthranilate + diphosphate = 5-phospho-alpha-D-ribose 1-diphosphate + anthranilate. Its pathway is amino-acid biosynthesis; L-tryptophan biosynthesis; L-tryptophan from chorismate: step 2/5. Its function is as follows. Catalyzes the transfer of the phosphoribosyl group of 5-phosphorylribose-1-pyrophosphate (PRPP) to anthranilate to yield N-(5'-phosphoribosyl)-anthranilate (PRA). This is Anthranilate phosphoribosyltransferase from Desulfitobacterium hafniense (strain DSM 10664 / DCB-2).